The chain runs to 689 residues: DNA-directed RNA polymerase subunit beta' (689 aa).

Positions 69, 71, 87, and 90 each coordinate Zn(2+). Mg(2+) is bound by residues Asp-489, Asp-491, and Asp-493.

The protein belongs to the RNA polymerase beta' chain family. RpoC1 subfamily. In terms of assembly, in plastids the minimal PEP RNA polymerase catalytic core is composed of four subunits: alpha, beta, beta', and beta''. When a (nuclear-encoded) sigma factor is associated with the core the holoenzyme is formed, which can initiate transcription. Mg(2+) serves as cofactor. The cofactor is Zn(2+).

The protein resides in the plastid. It is found in the chloroplast. The catalysed reaction is RNA(n) + a ribonucleoside 5'-triphosphate = RNA(n+1) + diphosphate. DNA-dependent RNA polymerase catalyzes the transcription of DNA into RNA using the four ribonucleoside triphosphates as substrates. In Helianthus annuus (Common sunflower), this protein is DNA-directed RNA polymerase subunit beta'.